The primary structure comprises 898 residues: Magnesium-transporting ATPase, P-type 1 (898 aa).

Topologically, residues 1–94 are cytoplasmic; it reads MFKEIFTRLI…QPSPWWVHLW (94 aa). Residues 95-115 form a helical membrane-spanning segment; the sequence is VCYRNPFNILLTILGAISYAT. Glutamate 116 is a topological domain (extracellular). Residues 117 to 137 traverse the membrane as a helical segment; the sequence is DLFAAGVIALMVAISTLLNFI. The Cytoplasmic segment spans residues 138–287; sequence QEARSTKAAD…PNAFQQGISR (150 aa). Residues 288–308 form a helical membrane-spanning segment; that stretch reads VSMLLIRFMLVMAPVVLLING. Topologically, residues 309 to 317 are extracellular; sequence YTKGDWWEA. The chain crosses the membrane as a helical span at residues 318 to 335; sequence ALFALSVAVGLTPEMLPM. Residue glutamate 331 coordinates Mg(2+). Residues 336-695 are Cytoplasmic-facing; it reads IVTSTLARGA…IEGRRTFANM (360 aa). The 4-aspartylphosphate intermediate role is filled by aspartate 373. Mg(2+) is bound by residues aspartate 641, aspartate 645, and asparagine 709. A helical transmembrane segment spans residues 696-715; that stretch reads LKYIKMTASSNFGNVFSVLV. The Extracellular portion of the chain corresponds to 716–724; sequence ASAFLPFLP. A helical membrane pass occupies residues 725-744; that stretch reads MLPLHLLIQNLLYDVSQVAI. Residues asparagine 734 and aspartate 738 each contribute to the Mg(2+) site. The Cytoplasmic portion of the chain corresponds to 745–766; it reads PFDNVDDEQIQKPQRWNPADLG. A helical membrane pass occupies residues 767-790; that stretch reads RFMIFFGPISSIFDILTFCLMWWV. Topologically, residues 791–799 are extracellular; sequence FHANTPETQ. The helical transmembrane segment at 800 to 818 threads the bilayer; sequence TLFQSGWFVVGLLSQTLIV. Topologically, residues 819-831 are cytoplasmic; sequence HMIRTRRVPFIQS. The chain crosses the membrane as a helical span at residues 832–851; sequence CASWPLMIMTVIVMIVGIAL. The Extracellular segment spans residues 852-866; sequence PFSPLASYLQLQALP. A helical transmembrane segment spans residues 867 to 886; it reads LSYFPWLVAILAGYMTLTQL. Residues 887 to 898 lie on the Cytoplasmic side of the membrane; it reads VKGFYSRRYGWQ.

This sequence belongs to the cation transport ATPase (P-type) (TC 3.A.3) family. Type IIIB subfamily.

Its subcellular location is the cell inner membrane. It carries out the reaction Mg(2+)(out) + ATP + H2O = Mg(2+)(in) + ADP + phosphate + H(+). Mediates magnesium influx to the cytosol. In Escherichia coli O157:H7, this protein is Magnesium-transporting ATPase, P-type 1 (mgtA).